Reading from the N-terminus, the 212-residue chain is Peptide methionine sulfoxide reductase MsrA (212 aa).

Cys52 is an active-site residue.

It belongs to the MsrA Met sulfoxide reductase family.

The catalysed reaction is L-methionyl-[protein] + [thioredoxin]-disulfide + H2O = L-methionyl-(S)-S-oxide-[protein] + [thioredoxin]-dithiol. The enzyme catalyses [thioredoxin]-disulfide + L-methionine + H2O = L-methionine (S)-S-oxide + [thioredoxin]-dithiol. In terms of biological role, has an important function as a repair enzyme for proteins that have been inactivated by oxidation. Catalyzes the reversible oxidation-reduction of methionine sulfoxide in proteins to methionine. The sequence is that of Peptide methionine sulfoxide reductase MsrA from Escherichia coli O6:K15:H31 (strain 536 / UPEC).